The sequence spans 118 residues: uncharacterized protein (118 aa).

Positions 1 to 26 (MTKLKMLSMLTVMIASLFIFSSQALA) are cleaved as a signal peptide. One can recognise an SH3b domain in the interval 30–104 (FTVSTSSGAP…VNIGYVSDTY (75 aa)).

It to B.subtilis YraI.

This is an uncharacterized protein from Bacillus subtilis (strain 168).